Consider the following 196-residue polypeptide: Glycerol-3-phosphate acyltransferase 2 (196 aa).

Transmembrane regions (helical) follow at residues 2–22 (GWWL…SYLI), 52–72 (VGGI…FITI), 80–100 (IVSL…FMKF), 112–132 (IIFC…LVIV), and 137–156 (YASL…GYLL).

The protein belongs to the PlsY family. In terms of assembly, probably interacts with PlsX.

The protein localises to the cell inner membrane. It carries out the reaction an acyl phosphate + sn-glycerol 3-phosphate = a 1-acyl-sn-glycero-3-phosphate + phosphate. It participates in lipid metabolism; phospholipid metabolism. Its function is as follows. Catalyzes the transfer of an acyl group from acyl-phosphate (acyl-PO(4)) to glycerol-3-phosphate (G3P) to form lysophosphatidic acid (LPA). This enzyme utilizes acyl-phosphate as fatty acyl donor, but not acyl-CoA or acyl-ACP. This is Glycerol-3-phosphate acyltransferase 2 from Thermotoga maritima (strain ATCC 43589 / DSM 3109 / JCM 10099 / NBRC 100826 / MSB8).